A 189-amino-acid polypeptide reads, in one-letter code: Potassium-transporting ATPase KdpC subunit (189 aa).

The chain crosses the membrane as a helical span at residues 10–30 (LTLVFCVFFSVCYILVLWIFA).

The protein belongs to the KdpC family. As to quaternary structure, the system is composed of three essential subunits: KdpA, KdpB and KdpC.

Its subcellular location is the cell inner membrane. Functionally, part of the high-affinity ATP-driven potassium transport (or Kdp) system, which catalyzes the hydrolysis of ATP coupled with the electrogenic transport of potassium into the cytoplasm. This subunit acts as a catalytic chaperone that increases the ATP-binding affinity of the ATP-hydrolyzing subunit KdpB by the formation of a transient KdpB/KdpC/ATP ternary complex. The chain is Potassium-transporting ATPase KdpC subunit from Phocaeicola vulgatus (strain ATCC 8482 / DSM 1447 / JCM 5826 / CCUG 4940 / NBRC 14291 / NCTC 11154) (Bacteroides vulgatus).